The chain runs to 242 residues: Type III pantothenate kinase (242 aa).

Position 7 to 14 (7 to 14 (DLGNSRFK)) interacts with ATP. Residues Tyr91 and 98–101 (GVDR) each bind substrate. Asp100 (proton acceptor) is an active-site residue. Thr121 is a binding site for ATP. Thr171 is a substrate binding site.

It belongs to the type III pantothenate kinase family. As to quaternary structure, homodimer. NH4(+) serves as cofactor. K(+) is required as a cofactor.

The protein localises to the cytoplasm. The catalysed reaction is (R)-pantothenate + ATP = (R)-4'-phosphopantothenate + ADP + H(+). It participates in cofactor biosynthesis; coenzyme A biosynthesis; CoA from (R)-pantothenate: step 1/5. Its function is as follows. Catalyzes the phosphorylation of pantothenate (Pan), the first step in CoA biosynthesis. This is Type III pantothenate kinase from Xylella fastidiosa (strain M23).